The chain runs to 65 residues: Large ribosomal subunit protein bL35 (65 aa).

A disordered region spans residues 1–26 (MPKIKTVRGAAKRFKKTASGGFKRKQ). Basic residues predominate over residues 10-26 (AAKRFKKTASGGFKRKQ).

The protein belongs to the bacterial ribosomal protein bL35 family.

The polypeptide is Large ribosomal subunit protein bL35 (Mannheimia succiniciproducens (strain KCTC 0769BP / MBEL55E)).